The primary structure comprises 767 residues: Tetratricopeptide repeat protein 16 (767 aa).

9 TPR repeats span residues 18–51 (VREYYNQGHQCLLQEDWEMSVLFFSRALHLDPKL), 53–85 (DFYVFRAEAFIQLCDFSSALQNLRRAYSYDPGN), 93–126 (AFVLYLQGQCLYELCDFQEALCVFLQASDLQPQN), 128–155 (SFSYRCMACLLALKRYHDCLALITREVK), 208–241 (AKQSLQDASTLAVQGKVHRALKCINCAIENNPLD), 242–275 (PNFFFFRGTLRRRLQQFDHAVEDFLKAMDMVTDT), 288–321 (LLTYNDFAVHCYNHGAYQEGVLLLNKAIRDEQNE), 322–355 (KGLYINRGDCFFQLGNLAFAEADYKQALALSPLD), and 363–396 (GVLQEKLGFCQQKHRQFQTAEEHFSEAIRHSPQK). The disordered stretch occupies residues 612–733 (EVTPAYGQRD…DSLSFSEISS (122 aa)). Polar residues predominate over residues 684-718 (QRSSQKVTKTPSLTHSTTHSDIGESANDTPGQTPW).

In Mus musculus (Mouse), this protein is Tetratricopeptide repeat protein 16 (Ttc16).